Here is a 199-residue protein sequence, read N- to C-terminus: RNA-free ribonuclease P (199 aa).

The protein belongs to the HARP family.

The enzyme catalyses Endonucleolytic cleavage of RNA, removing 5'-extranucleotides from tRNA precursor.. Functionally, RNA-free RNase P that catalyzes the removal of the 5'-leader sequence from pre-tRNA to produce the mature 5'-terminus. This is RNA-free ribonuclease P from Pyrococcus furiosus (strain ATCC 43587 / DSM 3638 / JCM 8422 / Vc1).